The sequence spans 524 residues: Keratin, type II cytoskeletal 71 (524 aa).

The interval 1 to 130 is head; it reads MSRQFTCKSG…DPEIQKVRAQ (130 aa). Residues 131–166 form a coil 1A region; sequence EREQIKALNNKFASFIDKVRFLEQQNQVLQTKWELL. Residues 131–444 enclose the IF rod domain; the sequence is EREQIKALNN…KLLESEECRM (314 aa). Residues 167 to 185 are linker 1; it reads QQLDLNNCKNNLEPILEGH. Positions 186–277 are coil 1B; it reads ISNMRKQLET…CLFEAEMAQI (92 aa). The linker 12 stretch occupies residues 278-301; that stretch reads QSHISDMSVILSMDNNRNLDLDSI. The interval 302-440 is coil 2; the sequence is IDEVRAQYEE…ATYRKLLESE (139 aa). Positions 441–524 are tail; sequence ECRMSGEYSS…LSTPSKKGGR (84 aa). The segment at 493-524 is disordered; it reads GGENRSRGSASDYKDTLTKGSSLSTPSKKGGR. Residues 494–509 are compositionally biased toward basic and acidic residues; it reads GENRSRGSASDYKDTL. Polar residues predominate over residues 510 to 524; it reads TKGSSLSTPSKKGGR.

The protein belongs to the intermediate filament family. In terms of assembly, heterodimer of a type I and a type II keratin. Associates with KRT16 and/or KRT17. Specifically expressed in the inner root sheath (IRS) of the hair follicle. Present in Henle and the Huxley layers of the IRS, while expression in the cuticle is unsure (at protein level).

The protein localises to the cytoplasm. The protein resides in the cytoskeleton. Its function is as follows. Plays a central role in hair formation. Essential component of keratin intermediate filaments in the inner root sheath (IRS) of the hair follicle. The polypeptide is Keratin, type II cytoskeletal 71 (Krt71) (Mus musculus (Mouse)).